Here is a 351-residue protein sequence, read N- to C-terminus: Uroporphyrinogen decarboxylase (351 aa).

Substrate contacts are provided by residues 25-29, Asp74, Tyr151, Ser206, and His325; that span reads RQAGR.

This sequence belongs to the uroporphyrinogen decarboxylase family. As to quaternary structure, homodimer.

It localises to the cytoplasm. It catalyses the reaction uroporphyrinogen III + 4 H(+) = coproporphyrinogen III + 4 CO2. It functions in the pathway porphyrin-containing compound metabolism; protoporphyrin-IX biosynthesis; coproporphyrinogen-III from 5-aminolevulinate: step 4/4. Its function is as follows. Catalyzes the decarboxylation of four acetate groups of uroporphyrinogen-III to yield coproporphyrinogen-III. The protein is Uroporphyrinogen decarboxylase of Chlorobium luteolum (strain DSM 273 / BCRC 81028 / 2530) (Pelodictyon luteolum).